Here is a 448-residue protein sequence, read N- to C-terminus: Phosphohexose mutases (448 aa).

S97 (phosphoserine intermediate) is an active-site residue. The Mg(2+) site is built by S97, D237, D239, and D241.

This sequence belongs to the phosphohexose mutase family. It depends on Mg(2+) as a cofactor.

It carries out the reaction alpha-D-glucose 1-phosphate = alpha-D-glucose 6-phosphate. The catalysed reaction is alpha-D-mannose 1-phosphate = D-mannose 6-phosphate. It participates in nucleotide-sugar biosynthesis; GDP-alpha-D-mannose biosynthesis; alpha-D-mannose 1-phosphate from D-fructose 6-phosphate: step 2/2. Its function is as follows. Involved in xanthan production. This chain is Phosphohexose mutases (xanA), found in Xanthomonas campestris pv. campestris (strain ATCC 33913 / DSM 3586 / NCPPB 528 / LMG 568 / P 25).